The following is a 408-amino-acid chain: Neutral cholesterol ester hydrolase 1 (408 aa).

The Cytoplasmic segment spans residues 1-4 (MRSS). The helical; Signal-anchor for type II membrane protein transmembrane segment at 5-25 (CVLLTALVALAAYYVYIPLPG) threads the bilayer. Residues 26 to 408 (SVSDPWKLML…SYIKWLDQNL (383 aa)) lie on the Lumenal side of the membrane. An Involved in the stabilization of the negatively charged intermediate by the formation of the oxyanion hole motif is present at residues 113–115 (HGG). The active site involves serine 191. Residues asparagine 270 and asparagine 287 are each glycosylated (N-linked (GlcNAc...) asparagine). Active-site residues include aspartate 348 and histidine 378. Asparagine 389 carries an N-linked (GlcNAc...) asparagine glycan.

It belongs to the 'GDXG' lipolytic enzyme family. Post-translationally, N-glycosylated.

The protein resides in the cell membrane. It localises to the microsome. The enzyme catalyses a 1-O-alkyl-2-acetyl-sn-glycerol + H2O = a 1-O-alkyl-sn-glycerol + acetate + H(+). It catalyses the reaction 1-O-hexadecyl-2-acetyl-sn-glycerol + H2O = 1-O-hexadecyl-sn-glycerol + acetate + H(+). It carries out the reaction a cholesterol ester + H2O = cholesterol + a fatty acid + H(+). The catalysed reaction is cholesteryl (9Z-octadecenoate) + H2O = cholesterol + (9Z)-octadecenoate + H(+). Its function is as follows. Hydrolyzes 2-acetyl monoalkylglycerol ether (1-O-alkyl-2-acetyl-sn-glycerol), the penultimate precursor of the pathway for de novo synthesis of platelet-activating factor. May be responsible for the hydrolysis of cholesterol esters (such as cholesteryl (9Z-octadecenoate)) in macrophages. Also involved in organ detoxification by hydrolyzing exogenous organophosphorus compounds. This chain is Neutral cholesterol ester hydrolase 1 (NCEH1), found in Pongo abelii (Sumatran orangutan).